The following is a 331-amino-acid chain: DSC E3 ubiquitin ligase complex subunit D (331 aa).

The N-linked (GlcNAc...) asparagine glycan is linked to Asn-26. The next 3 helical transmembrane spans lie at 63 to 83 (ILIY…ILFA), 107 to 127 (PFIG…NFFT), and 159 to 179 (LFLL…LIVE). The interval 188-225 (STTSTEILRVQDHDSEERGVHRTRPESRSSVVGAELDE) is disordered. The segment covering 196-214 (RVQDHDSEERGVHRTRPES) has biased composition (basic and acidic residues).

As to quaternary structure, component of the DSC E3 ubiquitin ligase complex composed of dscA, dscB, dscC and dscD.

It localises to the endoplasmic reticulum membrane. Its pathway is protein modification; protein ubiquitination. Its function is as follows. Component of the DSC E3 ubiquitin ligase complex which is required for the srbA transcriptional activator proteolytic cleavage to release the soluble transcription factor from the membrane in low oxygen or sterol conditions. Required for growth during hypoxia and triazole drug susceptibility, as well as for virulence in a murine model of invasive pulmonary aspergillosis (IPA). This Aspergillus fumigatus (strain ATCC MYA-4609 / CBS 101355 / FGSC A1100 / Af293) (Neosartorya fumigata) protein is DSC E3 ubiquitin ligase complex subunit D.